The sequence spans 104 residues: Biogenesis of lysosome-related organelles complex 1 subunit BLS1 (104 aa).

This sequence belongs to the BLOC1S1 family. As to quaternary structure, component of the biogenesis of lysosome-related organelles complex-1 (BLOC-1).

It localises to the endosome. Functionally, component of the biogenesis of lysosome-related organelles complex-1 (BLOC-1), a complex involved in endosomal cargo sorting. This Kluyveromyces lactis (strain ATCC 8585 / CBS 2359 / DSM 70799 / NBRC 1267 / NRRL Y-1140 / WM37) (Yeast) protein is Biogenesis of lysosome-related organelles complex 1 subunit BLS1 (BLS1).